Consider the following 370-residue polypeptide: tRNA-specific 2-thiouridylase MnmA (370 aa).

ATP is bound by residues alanine 10–serine 17 and methionine 36. Cysteine 111 functions as the Nucleophile in the catalytic mechanism. Residues cysteine 111 and cysteine 209 are joined by a disulfide bond. Position 135 (glycine 135) interacts with ATP. The interaction with tRNA stretch occupies residues lysine 159 to glutamine 161. Cysteine 209 serves as the catalytic Cysteine persulfide intermediate.

The protein belongs to the MnmA/TRMU family.

The protein resides in the cytoplasm. The enzyme catalyses S-sulfanyl-L-cysteinyl-[protein] + uridine(34) in tRNA + AH2 + ATP = 2-thiouridine(34) in tRNA + L-cysteinyl-[protein] + A + AMP + diphosphate + H(+). Its function is as follows. Catalyzes the 2-thiolation of uridine at the wobble position (U34) of tRNA, leading to the formation of s(2)U34. This chain is tRNA-specific 2-thiouridylase MnmA, found in Koribacter versatilis (strain Ellin345).